We begin with the raw amino-acid sequence, 378 residues long: Putative F-box protein At4g17565 (378 aa).

An F-box domain is found at 16 to 63 (PKWSELCPDLLRSIFEQLSFTNLNRAKLVCRSWNSASRGCVPKRNQIP).

The polypeptide is Putative F-box protein At4g17565 (Arabidopsis thaliana (Mouse-ear cress)).